Here is a 121-residue protein sequence, read N- to C-terminus: Small ribosomal subunit protein uS13 (121 aa).

The interval 94–121 (RGLPVRGQSTKNNARTRKGPKRTVGAKR) is disordered. The span at 107–121 (ARTRKGPKRTVGAKR) shows a compositional bias: basic residues.

It belongs to the universal ribosomal protein uS13 family. As to quaternary structure, part of the 30S ribosomal subunit. Forms a loose heterodimer with protein S19. Forms two bridges to the 50S subunit in the 70S ribosome.

Located at the top of the head of the 30S subunit, it contacts several helices of the 16S rRNA. In the 70S ribosome it contacts the 23S rRNA (bridge B1a) and protein L5 of the 50S subunit (bridge B1b), connecting the 2 subunits; these bridges are implicated in subunit movement. Contacts the tRNAs in the A and P-sites. In Natranaerobius thermophilus (strain ATCC BAA-1301 / DSM 18059 / JW/NM-WN-LF), this protein is Small ribosomal subunit protein uS13.